Consider the following 91-residue polypeptide: Large ribosomal subunit protein eL31 (91 aa).

This sequence belongs to the eukaryotic ribosomal protein eL31 family.

This Pyrobaculum neutrophilum (strain DSM 2338 / JCM 9278 / NBRC 100436 / V24Sta) (Thermoproteus neutrophilus) protein is Large ribosomal subunit protein eL31.